Consider the following 914-residue polypeptide: Chlorate reductase subunit alpha (914 aa).

The tat-type signal signal peptide spans 1–32 (MNSPDEHNGRRRFLQFSAAALASAAASPSLWA). A 4Fe-4S Mo/W bis-MGD-type domain is found at 62 to 125 (DSVGVMTHSN…VYCSWSKQPD (64 aa)). The [4Fe-4S] cluster site is built by His-69, Cys-73, Cys-77, and Cys-111. Asp-205 is a Mo-bis(molybdopterin guanine dinucleotide) binding site.

This sequence belongs to the prokaryotic molybdopterin-containing oxidoreductase family. In terms of assembly, heterotrimer of alpha, beta and gamma subunits. The cofactor is [4Fe-4S] cluster. Mo-bis(molybdopterin guanine dinucleotide) is required as a cofactor. Predicted to be exported by the Tat system. The position of the signal peptide cleavage has not been experimentally proven.

The protein resides in the periplasm. It catalyses the reaction chlorate + AH2 = chlorite + A + H2O. Terminal reductase that allows anaerobic growth on chlorate as the sole respiratory oxidant. The protein is Chlorate reductase subunit alpha (clrA) of Ideonella dechloratans.